The following is a 108-amino-acid chain: NADH dehydrogenase [ubiquinone] 1 alpha subcomplex subunit 8-A (108 aa).

CHCH domains are found at residues 28 to 69 and 70 to 108; these read GIRC…LKDL and HQRC…CPLK. Short sequence motifs (cx9C motif) lie at residues 31 to 41, 51 to 61, and 73 to 83; these read CMPENMAFLKC, CLEKGRDVTRC, and CPKEMDAYVGC. 4 disulfide bridges follow: C31/C61, C41/C51, C73/C105, and C83/C94. Residues 94 to 105 carry the Cx10C motif motif; sequence CRKEQEAFEKVC.

This sequence belongs to the complex I NDUFA8 subunit family. As to quaternary structure, complex I is composed of at least 49 different subunits.

It localises to the mitochondrion. The protein localises to the mitochondrion intermembrane space. In terms of biological role, accessory subunit of the mitochondrial membrane respiratory chain NADH dehydrogenase (Complex I), that is believed not to be involved in catalysis. Complex I functions in the transfer of electrons from NADH to the respiratory chain. The immediate electron acceptor for the enzyme is believed to be ubiquinone. This is NADH dehydrogenase [ubiquinone] 1 alpha subcomplex subunit 8-A from Arabidopsis thaliana (Mouse-ear cress).